We begin with the raw amino-acid sequence, 660 residues long: MTNIIELPEVLANQIAAGEVVERPASVVKELVENAIDAKSSQITVEIEESGLKMIQVTDNGEGMSHEDLPLSLRRHATSKIKSQSDLFRIRTLGFRGEALPSVASISKITIKTATKEVTHGSLLIATGGEIETLEAISTPTGTKIKVENLFYNTPARLKYMKSLQAELAHIVDVVNRLSLAHPEVAFTLISDGRQLTQTSGTGDLRQAIAGIYGLNTTKKMLAISNADLDFEVSGYVSLPELTRANRNYMTILVNGRYIKNFLLNRAILDGYGSKLMVGRFPIVVIDIQIDPYLADVNVHPTKQEVRISKERELMALISTAISESLKEQDLIPDALENLAKSSTRHFSKPEQTQLPLQSRGLYYDPQKNDFFVKESAVSEKIPETDFYSGAVDNSVKVEKVELLPHSEEVIGPSSVKHASRPQNTFTETDHPNLDLKNRQKLSQMLTRLENEGQSVFPELDYFGQMHGTYLFAQGKDGLFIIDQHAAQERVKYEYYRDKIGEVDSSLQQLLVPYLFEFSGSDFINLQEKMALLNEVGIFLEVYGHNTFILREHPIWMKEEEIASGVYEMCDMLLLTNEVSIKTYRAELAIMMSCKRSIKANHSLDDYSARNLLLQLAQCQNPYNCPHGRPVLINFSKADMEKMFRRIQENHTSLRELGKY.

The protein belongs to the DNA mismatch repair MutL/HexB family.

In terms of biological role, this protein is involved in the repair of mismatches in DNA. It is required for dam-dependent methyl-directed DNA mismatch repair. May act as a 'molecular matchmaker', a protein that promotes the formation of a stable complex between two or more DNA-binding proteins in an ATP-dependent manner without itself being part of a final effector complex. This Streptococcus pyogenes serotype M1 protein is DNA mismatch repair protein MutL.